The chain runs to 246 residues: Polyhedrin (246 aa).

Belongs to the polyhedrin family.

Major component of the virus occlusion bodies, which are large proteinaceous structures (polyhedra), that protect the virus from the outside environment for extended periods until they are ingested by insect larvae. The chain is Polyhedrin (PH) from Lepidoptera (butterflies and moths).